The following is a 491-amino-acid chain: Glycogen synthase 1 (491 aa).

K15 is a binding site for ADP-alpha-D-glucose.

Belongs to the glycosyltransferase 1 family. Bacterial/plant glycogen synthase subfamily.

The catalysed reaction is [(1-&gt;4)-alpha-D-glucosyl](n) + ADP-alpha-D-glucose = [(1-&gt;4)-alpha-D-glucosyl](n+1) + ADP + H(+). Its pathway is glycan biosynthesis; glycogen biosynthesis. Its function is as follows. Synthesizes alpha-1,4-glucan chains using ADP-glucose. This is Glycogen synthase 1 from Synechococcus sp. (strain JA-3-3Ab) (Cyanobacteria bacterium Yellowstone A-Prime).